The sequence spans 561 residues: Nephronectin (561 aa).

Positions 1–19 (MAVLLAAVLASSLYLQVAA) are cleaved as a signal peptide. The 36-residue stretch at 52–87 (SWGQCQPVCQPQCKHGECVGPNKCKCHPGFAGKTCN) folds into the EGF-like 1 domain. 6 disulfide bridges follow: C56–C69, C60–C75, C77–C86, C93–C104, C100–C113, and C115–C127. The EGF-like 2; calcium-binding domain maps to 89 to 128 (DLNECGLKPRPCKHRCMNTFGSYKCYCLNGYMLLPDGSCS). The 37-residue stretch at 132-168 (SCSMANCQYGCDVVKGQVRCQCPSPGLQLAPDGRTCV) folds into the EGF-like 3 domain. The region spanning 169-213 (DIDECATGRVSCPRFRQCVNTFGSYICKCHTGFDLMYIGGKYQCH) is the EGF-like 4; calcium-binding domain. 6 disulfides stabilise this stretch: C173–C186, C180–C195, C197–C212, C218–C231, C225–C240, and C242–C253. Residues 214–254 (DIDECSLGQHQCSSYARCYNIHGSYKCQCRDGYEGDGLNCV) enclose the EGF-like 5; calcium-binding domain. The segment at 266–370 (PIHMPERNGT…TSTTTRVITV (105 aa)) is disordered. A compositionally biased stretch (low complexity) spans 307–316 (TNRPTSKPTT). Positions 317-348 (RPTPNPTPQPTPPPPPPLPTEPRTTPLPPTPE) are enriched in pro residues. Residues 352-366 (TRPTTIAPATSTTTR) show a composition bias toward low complexity. The Integrin interaction signature appears at 382–384 (RGD). The MAM domain maps to 420–561 (HSCNFDHGLC…DDVSLKRGRC (142 aa)).

This sequence belongs to the nephronectin family. In terms of assembly, homodimer and homotrimer. Expressed in kidney (at protein level).

It localises to the secreted. Its subcellular location is the extracellular space. It is found in the extracellular matrix. Functionally, functional ligand of integrin alpha-8/beta-1 in kidney development. Regulates the expression of GDNF with integrin alpha-8/beta-1 which is essential for kidney development. May also play a role in the development and function of various tissues, regulating cell adhesion, spreading and survival through the binding of several integrins. This Mus musculus (Mouse) protein is Nephronectin (Npnt).